The sequence spans 868 residues: DNA mismatch repair protein MutS (868 aa).

An ATP-binding site is contributed by 620 to 627 (GPNMGGKS).

Belongs to the DNA mismatch repair MutS family.

Functionally, this protein is involved in the repair of mismatches in DNA. It is possible that it carries out the mismatch recognition step. This protein has a weak ATPase activity. The polypeptide is DNA mismatch repair protein MutS (Xylella fastidiosa (strain 9a5c)).